Here is a 205-residue protein sequence, read N- to C-terminus: Thymidylate kinase (205 aa).

10–17 (GIDGAGKS) provides a ligand contact to ATP.

This sequence belongs to the thymidylate kinase family.

The enzyme catalyses dTMP + ATP = dTDP + ADP. Phosphorylation of dTMP to form dTDP in both de novo and salvage pathways of dTTP synthesis. The chain is Thymidylate kinase from Ralstonia nicotianae (strain ATCC BAA-1114 / GMI1000) (Ralstonia solanacearum).